A 393-amino-acid chain; its full sequence is NAD(P)H-quinone oxidoreductase subunit H, chloroplastic (393 aa).

The protein belongs to the complex I 49 kDa subunit family. NDH is composed of at least 16 different subunits, 5 of which are encoded in the nucleus.

It localises to the plastid. The protein localises to the chloroplast thylakoid membrane. The catalysed reaction is a plastoquinone + NADH + (n+1) H(+)(in) = a plastoquinol + NAD(+) + n H(+)(out). It carries out the reaction a plastoquinone + NADPH + (n+1) H(+)(in) = a plastoquinol + NADP(+) + n H(+)(out). Its function is as follows. NDH shuttles electrons from NAD(P)H:plastoquinone, via FMN and iron-sulfur (Fe-S) centers, to quinones in the photosynthetic chain and possibly in a chloroplast respiratory chain. The immediate electron acceptor for the enzyme in this species is believed to be plastoquinone. Couples the redox reaction to proton translocation, and thus conserves the redox energy in a proton gradient. In Angiopteris evecta (Mule's foot fern), this protein is NAD(P)H-quinone oxidoreductase subunit H, chloroplastic.